Reading from the N-terminus, the 265-residue chain is MISVSDCFESLRNNSSQCALIPFITAGDPDLETTAKALEVLDRSGANMIELGVPYSDPLADGPVIQAAATRSLNRGTTLESVLEVVQTVSPKLRSPIILFTYYNPILYRGVENFLKKIYDVGARGLVVPDLPLEEADILLEPAKDIGIELTLLVAPTSPKERIKAIAHQSQGFIYLVSVTGVTGMRAQMQTRVEDLLAQMREVTDKPIGVGFGISQPEQALQVKKWGSDAVIVGSAVVKRLAEGSPDEGLKAIGEFCQNLKAAIN.

Catalysis depends on proton acceptor residues Glu-50 and Asp-61.

It belongs to the TrpA family. Tetramer of two alpha and two beta chains.

It catalyses the reaction (1S,2R)-1-C-(indol-3-yl)glycerol 3-phosphate + L-serine = D-glyceraldehyde 3-phosphate + L-tryptophan + H2O. The protein operates within amino-acid biosynthesis; L-tryptophan biosynthesis; L-tryptophan from chorismate: step 5/5. Its function is as follows. The alpha subunit is responsible for the aldol cleavage of indoleglycerol phosphate to indole and glyceraldehyde 3-phosphate. The chain is Tryptophan synthase alpha chain from Trichodesmium erythraeum (strain IMS101).